The sequence spans 213 residues: Peptidoglycan-N-acetylglucosamine deacetylase BC_3618 (213 aa).

One can recognise a NodB homology domain in the interval 22-203 (KIIAITFDDG…ELKKQGYRFV (182 aa)). Residue Asp-29 is the Proton acceptor of the active site. Residues Asp-30, His-80, and His-84 each coordinate Zn(2+). His-175 acts as the Proton donor in catalysis.

The protein belongs to the polysaccharide deacetylase family. Zn(2+) serves as cofactor.

The catalysed reaction is peptidoglycan-N-acetyl-D-glucosamine + H2O = peptidoglycan-D-glucosamine + acetate.. Inhibited by CuCl(2) and ZnCl(2). In terms of biological role, catalyzes the deacetylation of N-acetylglucosamine (GlcNAc) residues in peptidoglycan. Also acts on soluble chitin substrates and N-acetylchitooligomers. Acts on cell wall peptidoglycan from the Gram-positive bacteria B.cereus and B.subtilis and the Gram-negative bacterium H.pylori. Not active on acetylated xylan. The protein is Peptidoglycan-N-acetylglucosamine deacetylase BC_3618 of Bacillus cereus (strain ATCC 14579 / DSM 31 / CCUG 7414 / JCM 2152 / NBRC 15305 / NCIMB 9373 / NCTC 2599 / NRRL B-3711).